The following is a 201-amino-acid chain: Small ribosomal subunit protein uS2 (201 aa).

It belongs to the universal ribosomal protein uS2 family.

The chain is Small ribosomal subunit protein uS2 from Nanoarchaeum equitans (strain Kin4-M).